A 166-amino-acid chain; its full sequence is MGFEDGFYTIRHLVEGQPPNIPGGMYASSKDGKDEPVTAEPLGPHSKIRWWIARYPEAGEDMYTITEFRVDESIPGQWARPHNEVGGPVYLYDRIRAEETGYVCEWRIQPAYEDVDGVFNIMGNSRIGSTDWADLREEGGKPQVYLKPVPVVPNMYIPRWFISKVD.

The tract at residues Asn-20–Ala-39 is disordered.

It belongs to the protease inhibitor I85 family.

Functionally, inhibits papain and cysteine cathepsin endopeptidases, and also inhibits cathepsins B and H, which exhibit both exopeptidase and endopeptidase activities. In Macrolepiota procera (Parasol mushroom), this protein is Macrocypin-5a.